Here is a 232-residue protein sequence, read N- to C-terminus: Enolase-phosphatase E1 (232 aa).

It belongs to the HAD-like hydrolase superfamily. MasA/MtnC family. Monomer. Mg(2+) is required as a cofactor.

The catalysed reaction is 5-methylsulfanyl-2,3-dioxopentyl phosphate + H2O = 1,2-dihydroxy-5-(methylsulfanyl)pent-1-en-3-one + phosphate. Its pathway is amino-acid biosynthesis; L-methionine biosynthesis via salvage pathway; L-methionine from S-methyl-5-thio-alpha-D-ribose 1-phosphate: step 3/6. The protein operates within amino-acid biosynthesis; L-methionine biosynthesis via salvage pathway; L-methionine from S-methyl-5-thio-alpha-D-ribose 1-phosphate: step 4/6. In terms of biological role, bifunctional enzyme that catalyzes the enolization of 2,3-diketo-5-methylthiopentyl-1-phosphate (DK-MTP-1-P) into the intermediate 2-hydroxy-3-keto-5-methylthiopentenyl-1-phosphate (HK-MTPenyl-1-P), which is then dephosphorylated to form the acireductone 1,2-dihydroxy-3-keto-5-methylthiopentene (DHK-MTPene). In Xylella fastidiosa (strain M12), this protein is Enolase-phosphatase E1.